The chain runs to 173 residues: Bifunctional protein PyrR (173 aa).

Positions Val-93–Thr-105 match the PRPP-binding motif.

This sequence belongs to the purine/pyrimidine phosphoribosyltransferase family. PyrR subfamily. In terms of assembly, homodimer and homohexamer; in equilibrium.

The enzyme catalyses UMP + diphosphate = 5-phospho-alpha-D-ribose 1-diphosphate + uracil. Functionally, regulates transcriptional attenuation of the pyrimidine nucleotide (pyr) operon by binding in a uridine-dependent manner to specific sites on pyr mRNA. This disrupts an antiterminator hairpin in the RNA and favors formation of a downstream transcription terminator, leading to a reduced expression of downstream genes. In terms of biological role, also displays a weak uracil phosphoribosyltransferase activity which is not physiologically significant. This chain is Bifunctional protein PyrR, found in Streptococcus uberis (strain ATCC BAA-854 / 0140J).